We begin with the raw amino-acid sequence, 415 residues long: Histidine--tRNA ligase (415 aa).

This sequence belongs to the class-II aminoacyl-tRNA synthetase family. In terms of assembly, homodimer.

It localises to the cytoplasm. The catalysed reaction is tRNA(His) + L-histidine + ATP = L-histidyl-tRNA(His) + AMP + diphosphate + H(+). The protein is Histidine--tRNA ligase of Rickettsia akari (strain Hartford).